A 684-amino-acid polypeptide reads, in one-letter code: Glycine--tRNA ligase beta subunit (684 aa).

This sequence belongs to the class-II aminoacyl-tRNA synthetase family. In terms of assembly, tetramer of two alpha and two beta subunits.

The protein localises to the cytoplasm. The catalysed reaction is tRNA(Gly) + glycine + ATP = glycyl-tRNA(Gly) + AMP + diphosphate. This chain is Glycine--tRNA ligase beta subunit, found in Pseudomonas fluorescens (strain Pf0-1).